The chain runs to 346 residues: Senescence-specific cysteine protease SAG12 (346 aa).

A signal peptide spans 1 to 25; that stretch reads MALKHMQIFLFVAIFSSFCFSITLS. Asn-124 carries an N-linked (GlcNAc...) asparagine glycan. Intrachain disulfides connect Cys-151-Cys-192, Cys-185-Cys-225, and Cys-283-Cys-335. Cys-154 is an active-site residue. His-289 is a catalytic residue. An N-linked (GlcNAc...) asparagine glycan is attached at Asn-301. Residue Asn-310 is part of the active site.

The protein belongs to the peptidase C1 family. As to expression, found in senescent leaves, especially in senescence-associated vacuoles- (SAVs) containing cells (e.g. mesophyll and guard cells), and in senescencing ovules of unfertilised pistils.

The protein resides in the vacuole. Its function is as follows. Cysteine protease that may have a developmental senescence specific cell death function during apoptosis, heavy metal detoxification, and hypersensitive response. In Arabidopsis thaliana (Mouse-ear cress), this protein is Senescence-specific cysteine protease SAG12.